The chain runs to 141 residues: MAKKVLGFIKLQIPAGAANPAPPVGPALGQKGVNIMEFCKQFNAKTQSEAGMIIPVVITVYSDKSFTFITKTPPAAVLLLKEASLKKGSGEPNRNKVGTVTRDQVRKIAELKMPDLNAVNSEGAEEMIMGTARSMGIVVEG.

Belongs to the universal ribosomal protein uL11 family. In terms of assembly, part of the ribosomal stalk of the 50S ribosomal subunit. Interacts with L10 and the large rRNA to form the base of the stalk. L10 forms an elongated spine to which L12 dimers bind in a sequential fashion forming a multimeric L10(L12)X complex. Post-translationally, one or more lysine residues are methylated.

Forms part of the ribosomal stalk which helps the ribosome interact with GTP-bound translation factors. This Pelodictyon phaeoclathratiforme (strain DSM 5477 / BU-1) protein is Large ribosomal subunit protein uL11.